We begin with the raw amino-acid sequence, 200 residues long: Interferon lambda-1 (200 aa).

A signal peptide spans 1–19 (MAAAWTVVLVTLVLGLAVA). Residue asparagine 65 is glycosylated (N-linked (GlcNAc...) asparagine). A disulfide bridge connects residues cysteine 68 and cysteine 164.

It belongs to the lambda interferon family.

It is found in the secreted. Cytokine with antiviral, antitumour and immunomodulatory activities. Plays a critical role in the antiviral host defense, predominantly in the epithelial tissues. Acts as a ligand for the heterodimeric class II cytokine receptor composed of IL10RB and IFNLR1, and receptor engagement leads to the activation of the JAK/STAT signaling pathway resulting in the expression of IFN-stimulated genes (ISG), which mediate the antiviral state. Has a restricted receptor distribution and therefore restricted targets: is primarily active in epithelial cells and this cell type-selective action is because of the epithelial cell-specific expression of its receptor IFNLR1. Exerts an immunomodulatory effect by up-regulating MHC class I antigen expression. The protein is Interferon lambda-1 (IFNL1) of Homo sapiens (Human).